The sequence spans 86 residues: Photosystem I reaction center subunit PsaK 1 (86 aa).

Positions 1 to 8 (MLTSTLLA) are excised as a propeptide. 2 helical membrane passes run 14–34 (LEWSPTVGIIMVIANVIAITF) and 60–80 (PALLATTAFGHILGVGLVLGL).

It belongs to the PsaG/PsaK family. The cyanobacterial PSI reaction center is composed of one copy each of PsaA,B,C,D,E,F,I,J,K,L,M and X, and forms dimeric and tetrameric complexes.

It is found in the cellular thylakoid membrane. This chain is Photosystem I reaction center subunit PsaK 1 (psaK1), found in Nostoc sp. (strain PCC 7120 / SAG 25.82 / UTEX 2576).